The following is a 387-amino-acid chain: uncharacterized protein (387 aa).

This sequence belongs to the geranylgeranyl reductase family. ChlP subfamily.

This is an uncharacterized protein from Methanocaldococcus jannaschii (strain ATCC 43067 / DSM 2661 / JAL-1 / JCM 10045 / NBRC 100440) (Methanococcus jannaschii).